Here is a 335-residue protein sequence, read N- to C-terminus: MQDPVSGFIYPEEWISLCTDETERLLVSQGLAVLTSDGTIRRRGFTTGSSASAAAKASVLSLTKTGFDEVSILTPAGIRVQIPVTIARGTGECRKYSGDYPGDVTAGLVFTAEATPADSGTTLVFGEGIGRWSRDTPRYKTGDPAVSCQAMDEIKNAIEEAVQETGIPGVSVRIFAREGRIVAEKTLNQMVGVVGGISVLGTTGFVEPWDDHLEQTVCDRAVHAERVVLTTGRIGMRYARMLFPDHEVILAGSRLGTIIPHLTGEVIICGLPALVLKYINPVILEGTGFSTVEEFMTNDRFLPAMQTSFQIYKSAHPNVRIVVVNREGAIIGDSQ.

This sequence belongs to the CbiD family.

The catalysed reaction is Co-precorrin-5B + S-adenosyl-L-methionine = Co-precorrin-6A + S-adenosyl-L-homocysteine. It participates in cofactor biosynthesis; adenosylcobalamin biosynthesis; cob(II)yrinate a,c-diamide from sirohydrochlorin (anaerobic route): step 6/10. Its function is as follows. Catalyzes the methylation of C-1 in cobalt-precorrin-5B to form cobalt-precorrin-6A. This is Cobalt-precorrin-5B C(1)-methyltransferase from Methanospirillum hungatei JF-1 (strain ATCC 27890 / DSM 864 / NBRC 100397 / JF-1).